The sequence spans 162 residues: UPF0114 protein PFLU_5318 (162 aa).

3 helical membrane-spanning segments follow: residues 15-35 (LLAP…LKFF), 53-73 (LILV…LVMV), and 136-156 (LMWY…MGYL).

Belongs to the UPF0114 family.

The protein resides in the cell membrane. This is UPF0114 protein PFLU_5318 from Pseudomonas fluorescens (strain SBW25).